The chain runs to 132 residues: Small ribosomal subunit protein uS8c (132 aa).

The protein belongs to the universal ribosomal protein uS8 family. In terms of assembly, part of the 30S ribosomal subunit.

It localises to the plastid. The protein resides in the cyanelle. In terms of biological role, one of the primary rRNA binding proteins, it binds directly to 16S rRNA central domain where it helps coordinate assembly of the platform of the 30S subunit. This Cyanophora paradoxa protein is Small ribosomal subunit protein uS8c (rps8).